A 34-amino-acid chain; its full sequence is Photosystem II reaction center protein Psb30 (34 aa).

A helical membrane pass occupies residues 7–27 (VAQLLALFVIITSGPAIIILI).

This sequence belongs to the Psb30/Ycf12 family. PSII is composed of 1 copy each of membrane proteins PsbA, PsbB, PsbC, PsbD, PsbE, PsbF, PsbH, PsbI, PsbJ, PsbK, PsbL, PsbM, PsbT, PsbX, PsbY, PsbZ, Psb30/Ycf12, peripheral proteins of the oxygen-evolving complex and a large number of cofactors. It forms dimeric complexes.

The protein resides in the plastid. The protein localises to the chloroplast thylakoid membrane. Its function is as follows. A core subunit of photosystem II (PSII), probably helps stabilize the reaction center. This Guillardia theta (Cryptophyte) protein is Photosystem II reaction center protein Psb30.